Reading from the N-terminus, the 474-residue chain is Methylenetetrahydrofolate--tRNA-(uracil-5-)-methyltransferase TrmFO (474 aa).

An FAD-binding site is contributed by 13–18 (GGGLAG).

It belongs to the MnmG family. TrmFO subfamily. FAD is required as a cofactor.

It localises to the cytoplasm. It catalyses the reaction uridine(54) in tRNA + (6R)-5,10-methylene-5,6,7,8-tetrahydrofolate + NADH + H(+) = 5-methyluridine(54) in tRNA + (6S)-5,6,7,8-tetrahydrofolate + NAD(+). It carries out the reaction uridine(54) in tRNA + (6R)-5,10-methylene-5,6,7,8-tetrahydrofolate + NADPH + H(+) = 5-methyluridine(54) in tRNA + (6S)-5,6,7,8-tetrahydrofolate + NADP(+). Its function is as follows. Catalyzes the folate-dependent formation of 5-methyl-uridine at position 54 (M-5-U54) in all tRNAs. The polypeptide is Methylenetetrahydrofolate--tRNA-(uracil-5-)-methyltransferase TrmFO (Bartonella tribocorum (strain CIP 105476 / IBS 506)).